Here is a 207-residue protein sequence, read N- to C-terminus: MARSKTSQRWLKEHFDDPYVKMAQKDGYRSRASYKLLEIQEKDRILRPGMTVVDLGAAPGGWSQVTSRVIGDKGRLIASDILEMDSIPDVTFIQGDFTDDAVFARILEAIGENPVDLVISDMAPNMSGVRAADQPRAMYLCELALDLAGRVLRPGGDFLIKIFQGEGFDTYHRQVRDSFDKVQMRKPLSSRDRSREQYLLARGFRGV.

Glycine 60, tryptophan 62, aspartate 80, aspartate 96, and aspartate 121 together coordinate S-adenosyl-L-methionine. Lysine 161 serves as the catalytic Proton acceptor.

The protein belongs to the class I-like SAM-binding methyltransferase superfamily. RNA methyltransferase RlmE family.

It localises to the cytoplasm. It catalyses the reaction uridine(2552) in 23S rRNA + S-adenosyl-L-methionine = 2'-O-methyluridine(2552) in 23S rRNA + S-adenosyl-L-homocysteine + H(+). Functionally, specifically methylates the uridine in position 2552 of 23S rRNA at the 2'-O position of the ribose in the fully assembled 50S ribosomal subunit. The protein is Ribosomal RNA large subunit methyltransferase E of Ectopseudomonas mendocina (strain ymp) (Pseudomonas mendocina).